The chain runs to 442 residues: 5-methylthioadenosine/S-adenosylhomocysteine deaminase (442 aa).

Residues His-72 and His-74 each coordinate Zn(2+). Glu-101 and His-194 together coordinate substrate. His-221 serves as a coordination point for Zn(2+). The substrate site is built by Glu-224 and Asp-309. Asp-309 is a binding site for Zn(2+).

It belongs to the metallo-dependent hydrolases superfamily. MTA/SAH deaminase family. Requires Zn(2+) as cofactor.

The enzyme catalyses S-adenosyl-L-homocysteine + H2O + H(+) = S-inosyl-L-homocysteine + NH4(+). It catalyses the reaction S-methyl-5'-thioadenosine + H2O + H(+) = S-methyl-5'-thioinosine + NH4(+). In terms of biological role, catalyzes the deamination of 5-methylthioadenosine and S-adenosyl-L-homocysteine into 5-methylthioinosine and S-inosyl-L-homocysteine, respectively. Is also able to deaminate adenosine. This Teredinibacter turnerae (strain ATCC 39867 / T7901) protein is 5-methylthioadenosine/S-adenosylhomocysteine deaminase.